Here is a 100-residue protein sequence, read N- to C-terminus: Urease subunit gamma (100 aa).

It belongs to the urease gamma subunit family. Heterotrimer of UreA (gamma), UreB (beta) and UreC (alpha) subunits. Three heterotrimers associate to form the active enzyme.

It localises to the cytoplasm. The enzyme catalyses urea + 2 H2O + H(+) = hydrogencarbonate + 2 NH4(+). Its pathway is nitrogen metabolism; urea degradation; CO(2) and NH(3) from urea (urease route): step 1/1. The chain is Urease subunit gamma from Roseobacter denitrificans (strain ATCC 33942 / OCh 114) (Erythrobacter sp. (strain OCh 114)).